The sequence spans 468 residues: ATP synthase subunit beta 3 (468 aa).

155-162 (GGAGVGKT) is a binding site for ATP.

This sequence belongs to the ATPase alpha/beta chains family. As to quaternary structure, F-type ATPases have 2 components, CF(1) - the catalytic core - and CF(0) - the membrane proton channel. CF(1) has five subunits: alpha(3), beta(3), gamma(1), delta(1), epsilon(1). CF(0) has three main subunits: a(1), b(2) and c(9-12). The alpha and beta chains form an alternating ring which encloses part of the gamma chain. CF(1) is attached to CF(0) by a central stalk formed by the gamma and epsilon chains, while a peripheral stalk is formed by the delta and b chains.

It is found in the cell inner membrane. The catalysed reaction is ATP + H2O + 4 H(+)(in) = ADP + phosphate + 5 H(+)(out). Functionally, produces ATP from ADP in the presence of a proton gradient across the membrane. The catalytic sites are hosted primarily by the beta subunits. This chain is ATP synthase subunit beta 3, found in Syntrophotalea carbinolica (strain DSM 2380 / NBRC 103641 / GraBd1) (Pelobacter carbinolicus).